The sequence spans 414 residues: Serine hydroxymethyltransferase (414 aa).

(6S)-5,6,7,8-tetrahydrofolate is bound by residues Leu121 and 125-127 (GHL). Residue Lys229 is modified to N6-(pyridoxal phosphate)lysine.

It belongs to the SHMT family. In terms of assembly, homodimer. The cofactor is pyridoxal 5'-phosphate.

It is found in the cytoplasm. The enzyme catalyses (6R)-5,10-methylene-5,6,7,8-tetrahydrofolate + glycine + H2O = (6S)-5,6,7,8-tetrahydrofolate + L-serine. It functions in the pathway one-carbon metabolism; tetrahydrofolate interconversion. It participates in amino-acid biosynthesis; glycine biosynthesis; glycine from L-serine: step 1/1. Its function is as follows. Catalyzes the reversible interconversion of serine and glycine with tetrahydrofolate (THF) serving as the one-carbon carrier. This reaction serves as the major source of one-carbon groups required for the biosynthesis of purines, thymidylate, methionine, and other important biomolecules. Also exhibits THF-independent aldolase activity toward beta-hydroxyamino acids, producing glycine and aldehydes, via a retro-aldol mechanism. This chain is Serine hydroxymethyltransferase, found in Polynucleobacter necessarius subsp. necessarius (strain STIR1).